Reading from the N-terminus, the 288-residue chain is Glycine--tRNA ligase alpha subunit (288 aa).

This sequence belongs to the class-II aminoacyl-tRNA synthetase family. Tetramer of two alpha and two beta subunits.

The protein resides in the cytoplasm. It carries out the reaction tRNA(Gly) + glycine + ATP = glycyl-tRNA(Gly) + AMP + diphosphate. The chain is Glycine--tRNA ligase alpha subunit from Rickettsia peacockii (strain Rustic).